Reading from the N-terminus, the 256-residue chain is tRNA (guanine-N(1)-)-methyltransferase (256 aa).

Residues Gly113 and 132–137 contribute to the S-adenosyl-L-methionine site; that span reads VGDYVL.

It belongs to the RNA methyltransferase TrmD family. As to quaternary structure, homodimer.

The protein localises to the cytoplasm. It carries out the reaction guanosine(37) in tRNA + S-adenosyl-L-methionine = N(1)-methylguanosine(37) in tRNA + S-adenosyl-L-homocysteine + H(+). Specifically methylates guanosine-37 in various tRNAs. The protein is tRNA (guanine-N(1)-)-methyltransferase of Coprothermobacter proteolyticus (strain ATCC 35245 / DSM 5265 / OCM 4 / BT).